Consider the following 315-residue polypeptide: Epithelial cell adhesion molecule (315 aa).

The signal sequence occupies residues 1–23 (MAPPKALAFGLLLAVVTATLAAA). Residues 24-266 (QKDCVCNNYK…APEFSMQGLT (243 aa)) lie on the Extracellular side of the membrane. Cystine bridges form between Cys27-Cys46, Cys29-Cys59, Cys38-Cys48, Cys66-Cys99, Cys110-Cys116, and Cys118-Cys135. The 73-residue stretch at 63 to 135 (ASKCLVMKAE…RTDKDTEITC (73 aa)) folds into the Thyroglobulin type-1 domain. Asn111 carries an N-linked (GlcNAc...) asparagine glycan. N-linked (GlcNAc...) asparagine glycosylation is present at Asn198. The chain crosses the membrane as a helical span at residues 267-289 (AGIIAVIVVVVLAVIAGIVVLVI). Topologically, residues 290-315 (STRKRSAKYEKAEIKEMGEIHRELNA) are cytoplasmic.

The protein belongs to the EPCAM family. As to quaternary structure, monomer. Interacts with phosphorylated CLDN7. In terms of processing, glycosylation at Asn-198 is crucial for protein stability.

Its subcellular location is the lateral cell membrane. The protein resides in the cell junction. It localises to the tight junction. Functionally, may act as a physical homophilic interaction molecule between intestinal epithelial cells (IECs) and intraepithelial lymphocytes (IELs) at the mucosal epithelium for providing immunological barrier as a first line of defense against mucosal infection. Plays a role in embryonic stem cells proliferation and differentiation. Up-regulates the expression of FABP5, MYC and cyclins A and E. This is Epithelial cell adhesion molecule (Epcam) from Rattus norvegicus (Rat).